A 178-amino-acid polypeptide reads, in one-letter code: MEQYHGTTIVSVRRGNQVALGGDGQVTLGNIVMKGTARKVRRIYNGKVLVGFAGSTADAFSLLDRFEAKLEKYQGNLTRAAVDLAKDWRSDRALRRLEAMLITADRETTLVITGNGDVLDPEGGIAAIGSGGAYAQSAAKALVENTELAPRDVVEKALTIAGELCIYTNTNFVIETLE.

Thr7 is an active-site residue. Residues Gly162, Cys165, and Thr168 each contribute to the Na(+) site.

Belongs to the peptidase T1B family. HslV subfamily. A double ring-shaped homohexamer of HslV is capped on each side by a ring-shaped HslU homohexamer. The assembly of the HslU/HslV complex is dependent on binding of ATP.

The protein resides in the cytoplasm. It catalyses the reaction ATP-dependent cleavage of peptide bonds with broad specificity.. Allosterically activated by HslU binding. Protease subunit of a proteasome-like degradation complex believed to be a general protein degrading machinery. The chain is ATP-dependent protease subunit HslV from Cupriavidus pinatubonensis (strain JMP 134 / LMG 1197) (Cupriavidus necator (strain JMP 134)).